The sequence spans 128 residues: Cystatin-1 (128 aa).

Residues Met-1–Ala-17 form the signal peptide. The Cystatin domain maps to Gly-20–Asn-128. Disulfide bonds link Cys-84–Cys-96 and Cys-107–Cys-127.

It belongs to the cystatin family. As to expression, mainly expressed in gut.

It localises to the secreted. In terms of biological role, inhibitor of cysteine proteinases. Strongly inhibits mammalian cathepsin B and H, and moderately inhibits mammalian cathepsin C. Also inhibits endogenous cathepsin B-like but not cathepsin C-like proteinases. May have a protective role against undesired digestion of a stored blood meal by endogenous peptidases. The sequence is that of Cystatin-1 from Ornithodoros moubata (Soft tick).